The sequence spans 368 residues: tRNA/tmRNA (uracil-C(5))-methyltransferase (368 aa).

Gln186, Tyr214, Asn219, Glu235, and Asp295 together coordinate S-adenosyl-L-methionine. Cys320 serves as the catalytic Nucleophile. The Proton acceptor role is filled by Glu354.

The protein belongs to the class I-like SAM-binding methyltransferase superfamily. RNA M5U methyltransferase family. TrmA subfamily.

The catalysed reaction is uridine(54) in tRNA + S-adenosyl-L-methionine = 5-methyluridine(54) in tRNA + S-adenosyl-L-homocysteine + H(+). It catalyses the reaction uridine(341) in tmRNA + S-adenosyl-L-methionine = 5-methyluridine(341) in tmRNA + S-adenosyl-L-homocysteine + H(+). Its function is as follows. Dual-specificity methyltransferase that catalyzes the formation of 5-methyluridine at position 54 (m5U54) in all tRNAs, and that of position 341 (m5U341) in tmRNA (transfer-mRNA). The chain is tRNA/tmRNA (uracil-C(5))-methyltransferase from Aromatoleum aromaticum (strain DSM 19018 / LMG 30748 / EbN1) (Azoarcus sp. (strain EbN1)).